We begin with the raw amino-acid sequence, 1058 residues long: MPKRKDIQKIMVIGSGPIIIGQAAEFDYAGTQACLALKEEGYKVILVNSNPATIMTDKEIADKVYIEPLTLEFVNRIIRKERPDAILPTLGGQTGLNMAMALSKAGILDDLEIELLGTKLSAIDQAEDRDLFKQLMQELDQPIPESTIVKTVDEAVTFARDIGYPVIVRPAFTLGGTGGGICSSEEELCEITENGLKLSPVTQCLIERSIAGFKEIEYEVMRDSADNALVVCNMENFDPVGIHTGDSIVFAPTQTLSDIENQMLRDASLKIIRALKIEGGCNVQLALDPYSFKYYVIEVNPRVSRSSALASKATGYPIAKLAAKIAVGLTLDEMINPITGTTYAMFEPALDYVVAKIPRFPFDKFEHGERQLGTQMKATGEVMAIGRNLEESLLKACRSLEIGVCHNEMTSLSNISDEELVTKVIKAQDDRLFYLSEAIRRGYSIEELESLTKIDLFFLDKLLHIVEIEQELQMHVDHLESLKKAKRYGFSDQKIAEIWQKDESDIRAMRHSHSLYPVYKMVDTCAAEFDAKTPYFYSTYELENESVQSNKESILVLGSGPIRIGQGVEFDYATVHSVKAIQKAGYEAIIMNSNPETVSTDFSVSDKLYFEPLTFEDVMNVIDLEQPKGVIVQFGGQTAINLAQALSEAGVTILGTQVEDLDRAEDRDLFEKALKELGIPQPQGQTATNEEEALEAAKKIGFPVLVRPSYVLGGRAMEIVENKEDLIEYIRTAVKASPEHPILVDSYIFGKECEVDAISDGKSVLIPGIMEHIERAGVHSGDSMAVYPPQQLSKQIQETIAEYTKRLAIGLNCIGMMNVQFVIKNEQVYVIEVNPRASRTVPFLSKVTGIPMAQIATKLILGQTLKDLGYEDGLYPQSQLVHIKAPVFSFTKLAQVDSLLGPEMKSTGEVMGSDTSLEKALYKAFEANNSHLSEFGQIVFTIADDSKAEALSLARRFKAIGYQIMATQGTAAYFAEQGLSACLVGKIGDAANDIPTLVRHGHVQAIVNTVGIKRTADKDGQMIRSSAIEQGVPLFTALDTAKAMLTVLESRCFNIEAI.

A carboxyphosphate synthetic domain region spans residues 1–401 (MPKRKDIQKI…SLLKACRSLE (401 aa)). Arg-129, Arg-169, Gly-175, Gly-176, Arg-208, Ile-210, Glu-215, Gly-241, Ile-242, His-243, Gln-284, and Glu-298 together coordinate ATP. The ATP-grasp 1 domain occupies 133-327 (KQLMQELDQP…IAKLAAKIAV (195 aa)). Mg(2+) contacts are provided by Gln-284, Glu-298, and Asn-300. The Mn(2+) site is built by Gln-284, Glu-298, and Asn-300. Residues 402–546 (IGVCHNEMTS…YSTYELENES (145 aa)) are oligomerization domain. Residues 547 to 929 (VQSNKESILV…ALYKAFEANN (383 aa)) are carbamoyl phosphate synthetic domain. The ATP-grasp 2 domain maps to 671-861 (EKALKELGIP…MAQIATKLIL (191 aa)). ATP is bound by residues Arg-707, Ser-746, Ile-748, Glu-752, Gly-777, Val-778, His-779, Ser-780, Gln-820, and Glu-832. Positions 820, 832, and 834 each coordinate Mg(2+). Positions 820, 832, and 834 each coordinate Mn(2+). Residues 930 to 1058 (SHLSEFGQIV…ESRCFNIEAI (129 aa)) enclose the MGS-like domain. The allosteric domain stretch occupies residues 930–1058 (SHLSEFGQIV…ESRCFNIEAI (129 aa)).

It belongs to the CarB family. In terms of assembly, composed of two chains; the small (or glutamine) chain promotes the hydrolysis of glutamine to ammonia, which is used by the large (or ammonia) chain to synthesize carbamoyl phosphate. Tetramer of heterodimers (alpha,beta)4. Requires Mg(2+) as cofactor. Mn(2+) serves as cofactor.

It catalyses the reaction hydrogencarbonate + L-glutamine + 2 ATP + H2O = carbamoyl phosphate + L-glutamate + 2 ADP + phosphate + 2 H(+). The enzyme catalyses hydrogencarbonate + NH4(+) + 2 ATP = carbamoyl phosphate + 2 ADP + phosphate + 2 H(+). It participates in amino-acid biosynthesis; L-arginine biosynthesis; carbamoyl phosphate from bicarbonate: step 1/1. It functions in the pathway pyrimidine metabolism; UMP biosynthesis via de novo pathway; (S)-dihydroorotate from bicarbonate: step 1/3. Large subunit of the glutamine-dependent carbamoyl phosphate synthetase (CPSase). CPSase catalyzes the formation of carbamoyl phosphate from the ammonia moiety of glutamine, carbonate, and phosphate donated by ATP, constituting the first step of 2 biosynthetic pathways, one leading to arginine and/or urea and the other to pyrimidine nucleotides. The large subunit (synthetase) binds the substrates ammonia (free or transferred from glutamine from the small subunit), hydrogencarbonate and ATP and carries out an ATP-coupled ligase reaction, activating hydrogencarbonate by forming carboxy phosphate which reacts with ammonia to form carbamoyl phosphate. The sequence is that of Carbamoyl phosphate synthase large chain from Streptococcus pyogenes serotype M3 (strain ATCC BAA-595 / MGAS315).